Here is a 542-residue protein sequence, read N- to C-terminus: Phenylacetone monooxygenase (542 aa).

Residues S27, E46, 54–57 (VWYW), D66, Y72, V119, and Q152 each bind FAD. 64–66 (RCD) contacts NADP(+). NADP(+) contacts are provided by residues 194 to 200 (TGSSGIQ), 217 to 218 (RT), and 336 to 337 (KR). M446 contacts FAD. W501 provides a ligand contact to NADP(+).

Belongs to the FAD-binding monooxygenase family. In terms of assembly, monomer. FAD is required as a cofactor.

The enzyme catalyses phenylacetone + NADPH + O2 + H(+) = benzyl acetate + NADP(+) + H2O. Catalyzes a Baeyer-Villiger oxidation reaction, i.e. the insertion of an oxygen atom into a carbon-carbon bond adjacent to a carbonyl, which converts ketones to esters. Is most efficient with phenylacetone as substrate, leading to the formation of benzyl acetate. Can also oxidize other aromatic ketones (benzylacetone, alpha-methylphenylacetone and 4-hydroxyacetophenone), some aliphatic ketones (dodecan-2-one and bicyclohept-2-en-6-one) and sulfides (e.g. methyl 4-tolylsulfide). The polypeptide is Phenylacetone monooxygenase (pamO) (Thermobifida fusca (strain YX)).